Reading from the N-terminus, the 618-residue chain is DNA mismatch repair protein MutL (618 aa).

The span at 367-378 shows a compositional bias: low complexity; the sequence is EPTAAREPATPR. The tract at residues 367-402 is disordered; it reads EPTAAREPATPRYSGGASGGNGGRQTAGGWPHAQPG. Gly residues predominate over residues 382 to 392; sequence GASGGNGGRQT.

Belongs to the DNA mismatch repair MutL/HexB family.

Functionally, this protein is involved in the repair of mismatches in DNA. It is required for dam-dependent methyl-directed DNA mismatch repair. May act as a 'molecular matchmaker', a protein that promotes the formation of a stable complex between two or more DNA-binding proteins in an ATP-dependent manner without itself being part of a final effector complex. In Salmonella choleraesuis (strain SC-B67), this protein is DNA mismatch repair protein MutL.